The following is a 203-amino-acid chain: Small ribosomal subunit protein uS4 (203 aa).

Positions 1–46 (MSKRQSAKYKLDRRMGENIWGRPKSPVNRREYGPGQHGQRRKGKMS) are disordered. Residues 94-157 (RRLDAVVYRA…QEMALVAEAQ (64 aa)) form the S4 RNA-binding domain.

Belongs to the universal ribosomal protein uS4 family. Part of the 30S ribosomal subunit. Contacts protein S5. The interaction surface between S4 and S5 is involved in control of translational fidelity.

Its function is as follows. One of the primary rRNA binding proteins, it binds directly to 16S rRNA where it nucleates assembly of the body of the 30S subunit. In terms of biological role, with S5 and S12 plays an important role in translational accuracy. This chain is Small ribosomal subunit protein uS4, found in Sphingopyxis alaskensis (strain DSM 13593 / LMG 18877 / RB2256) (Sphingomonas alaskensis).